We begin with the raw amino-acid sequence, 124 residues long: Small ribosomal subunit protein uS12 (124 aa).

D89 is modified (3-methylthioaspartic acid). The tract at residues 103 to 124 is disordered; that stretch reads DTAGVKDRRQGRSKYGAKRPKD. A compositionally biased stretch (basic residues) spans 113-124; that stretch reads GRSKYGAKRPKD.

The protein belongs to the universal ribosomal protein uS12 family. Part of the 30S ribosomal subunit. Contacts proteins S8 and S17. May interact with IF1 in the 30S initiation complex.

Functionally, with S4 and S5 plays an important role in translational accuracy. In terms of biological role, interacts with and stabilizes bases of the 16S rRNA that are involved in tRNA selection in the A site and with the mRNA backbone. Located at the interface of the 30S and 50S subunits, it traverses the body of the 30S subunit contacting proteins on the other side and probably holding the rRNA structure together. The combined cluster of proteins S8, S12 and S17 appears to hold together the shoulder and platform of the 30S subunit. The chain is Small ribosomal subunit protein uS12 from Acaryochloris marina (strain MBIC 11017).